A 208-amino-acid chain; its full sequence is Protein IncB (208 aa).

This protein is thought to be cis acting and to contain the putative attachment site on the DNA for the cellular partition apparatus. This Escherichia coli protein is Protein IncB (incB).